Consider the following 151-residue polypeptide: Superoxide dismutase [Cu-Zn] 4 (151 aa).

Cu cation is bound by residues H45, H47, and H62. A disulfide bond links C56 and C145. The Zn(2+) site is built by H62, H70, H79, and D82. H120 contributes to the Cu cation binding site.

Belongs to the Cu-Zn superoxide dismutase family. Homodimer. Cu cation is required as a cofactor. Zn(2+) serves as cofactor.

It is found in the cytoplasm. It catalyses the reaction 2 superoxide + 2 H(+) = H2O2 + O2. In terms of biological role, destroys radicals which are normally produced within the cells and which are toxic to biological systems. Protects spores from cellular damage caused by UV LIGHT. The sequence is that of Superoxide dismutase [Cu-Zn] 4 (sodD) from Dictyostelium discoideum (Social amoeba).